The chain runs to 474 residues: Glutathione synthetase (474 aa).

Ala2 carries the post-translational modification N-acetylalanine. Arg125 contributes to the substrate binding site. Glu144 contacts ATP. 2 residues coordinate Mg(2+): Glu144 and Asn146. Substrate-binding positions include 148–151 (ISAS), 214–216 (ERN), Gln220, and 267–270 (RDGY). Residues Lys305, 364–373 (KPQREGGGNN), Tyr375, and 398–401 (MEKI) contribute to the ATP site. Residue Glu368 coordinates Mg(2+). At Ser415 the chain carries Phosphoserine. Glu425 contacts ATP. Arg450 is a binding site for substrate. Residues Lys452 and Asp458 each coordinate ATP. 461-462 (VA) is a binding site for substrate.

This sequence belongs to the eukaryotic GSH synthase family. As to quaternary structure, homodimer. Mg(2+) is required as a cofactor.

It carries out the reaction gamma-L-glutamyl-L-cysteine + glycine + ATP = glutathione + ADP + phosphate + H(+). The enzyme catalyses gamma-L-glutamyl-(2S)-2-aminobutanoate + glycine + ATP = ophthalmate + ADP + phosphate + H(+). The protein operates within sulfur metabolism; glutathione biosynthesis; glutathione from L-cysteine and L-glutamate: step 2/2. Catalyzes the production of glutathione from gamma-glutamylcysteine and glycine in an ATP-dependent manner. Glutathione (gamma-glutamylcysteinylglycine, GSH) is the most abundant intracellular thiol in living aerobic cells and is required for numerous processes including the protection of cells against oxidative damage, amino acid transport, the detoxification of foreign compounds, the maintenance of protein sulfhydryl groups in a reduced state and acts as a cofactor for a number of enzymes. Participates in ophthalmate biosynthesis in hepatocytes. The polypeptide is Glutathione synthetase (Homo sapiens (Human)).